The following is a 337-amino-acid chain: Methionine import ATP-binding protein MetN (337 aa).

The ABC transporter domain occupies 4–240 (IKNLEITYPG…PWHPITKEFV (237 aa)). 37 to 44 (GLSGAGKS) serves as a coordination point for ATP.

The protein belongs to the ABC transporter superfamily. Methionine importer (TC 3.A.1.24) family. The complex is composed of two ATP-binding proteins (MetN), two transmembrane proteins (MetI) and a solute-binding protein (MetQ).

It is found in the cell membrane. It carries out the reaction L-methionine(out) + ATP + H2O = L-methionine(in) + ADP + phosphate + H(+). It catalyses the reaction D-methionine(out) + ATP + H2O = D-methionine(in) + ADP + phosphate + H(+). Its function is as follows. Part of the ABC transporter complex MetNIQ involved in methionine import. Responsible for energy coupling to the transport system. The protein is Methionine import ATP-binding protein MetN of Carboxydothermus hydrogenoformans (strain ATCC BAA-161 / DSM 6008 / Z-2901).